A 647-amino-acid polypeptide reads, in one-letter code: Chaperone protein HtpG (647 aa).

The segment at 1-353 (MNAHVEQLEF…AQDMSLNVSR (353 aa)) is a; substrate-binding. Residues 354–567 (EILQQDRQIK…AFGMTPALAR (214 aa)) are b. Residues 568–647 (IYRASGQEVP…LLAERLARTL (80 aa)) are c.

It belongs to the heat shock protein 90 family. Homodimer.

Its subcellular location is the cytoplasm. Its function is as follows. Molecular chaperone. Has ATPase activity. The sequence is that of Chaperone protein HtpG from Mycobacterium bovis (strain ATCC BAA-935 / AF2122/97).